The chain runs to 577 residues: Acyl-coenzyme A synthetase ACSM2A, mitochondrial (577 aa).

A mitochondrion-targeting transit peptide spans 1-46 (MHWLRKVQGLCTLWGTQMSSRTLYINSRQLVSLQWGHQEVPAKFNF). Glutamine 139 lines the CoA pocket. ATP contacts are provided by residues 221–229 (TSGTSGLPK), 359–364 (ESYGQT), aspartate 446, and arginine 461. Threonine 364 contributes to the substrate binding site. 469-471 (SGY) contributes to the CoA binding site. Residue arginine 472 participates in substrate binding. Residue arginine 501 participates in CoA binding. Serine 513 is modified (phosphoserine). Residues lysine 532 and 540-542 (YPR) each bind CoA. Lysine 557 is an ATP binding site.

The protein belongs to the ATP-dependent AMP-binding enzyme family. Monomer. Mg(2+) is required as a cofactor. It depends on Mn(2+) as a cofactor.

It is found in the mitochondrion. The catalysed reaction is a medium-chain fatty acid + ATP + CoA = a medium-chain fatty acyl-CoA + AMP + diphosphate. It carries out the reaction benzoate + ATP + CoA = benzoyl-CoA + AMP + diphosphate. It catalyses the reaction hexanoate + ATP + CoA = hexanoyl-CoA + AMP + diphosphate. The enzyme catalyses butanoate + ATP + CoA = butanoyl-CoA + AMP + diphosphate. The catalysed reaction is octanoate + ATP + CoA = octanoyl-CoA + AMP + diphosphate. It carries out the reaction decanoate + ATP + CoA = decanoyl-CoA + AMP + diphosphate. Functionally, catalyzes the activation of fatty acids by CoA to produce an acyl-CoA, the first step in fatty acid metabolism. Capable of activating medium-chain fatty acids (e.g. butyric (C4) to decanoic (C10) acids), and certain carboxylate-containing xenobiotics, e.g. benzoate. This Homo sapiens (Human) protein is Acyl-coenzyme A synthetase ACSM2A, mitochondrial (ACSM2A).